A 479-amino-acid polypeptide reads, in one-letter code: Caspase-8 (479 aa).

A propeptide spanning residues 1-216 is cleaved from the precursor; sequence MDFSRNLYDI…TISDSPREQD (216 aa). DED domains lie at 2–80 and 100–177; these read DFSR…TYLN and AYRV…IIND. 2 positions are modified to phosphoserine: Ser188 and Ser211. Residue Lys224 is modified to N6-acetyllysine. Residue His317 is part of the active site. Tyr334 bears the Phosphotyrosine mark. Residue Cys360 is part of the active site. Residues 375-384 constitute a propeptide that is removed on maturation; it reads SEEQPYLEMD. Phosphotyrosine; by SRC is present on Tyr380. The residue at position 387 (Ser387) is a Phosphoserine; by CDK1. Arg413 is subject to (Microbial infection) ADP-riboxanated arginine.

This sequence belongs to the peptidase C14A family. Heterotetramer that consists of two anti-parallel arranged heterodimers, each one formed by a 18 kDa (p18) and a 10 kDa (p10) subunit. Component of the death-induced signaling complex (DISC) composed of cell surface receptor FAS/CD95 or TNFRSF1A, adapter protein FADD and the CASP8 protease; recruitment of CASP8 to the complex is required for processing of CASP8 into the p18 and p10 subunits. Component of the AIM2 PANoptosome complex, a multiprotein complex that drives inflammatory cell death (PANoptosis). Interacts with CFLAR and PEA15. Interacts with TNFAIP8L2. Interacts with CASP8AP2. Interacts with RFFL and RNF34; negatively regulate CASP8 through proteasomal degradation. Interacts with NOL3; decreases CASP8 activity in a mitochondria localization- and phosphorylation-dependent manner and this interaction is dissociated by calcium. Interacts with UBR2ca. Interacts with RIPK1. Interacts with stimulated TNFRSF10B; this interaction is followed by CASP8 proteolytic cleavage and activation. Interacts (phosphorylated on Tyr-380) with PIK3R1. In terms of assembly, interacts at the endoplasmic reticulum with a complex containing BCAP31, BAP29, BCL2 and/or BCL2L1. As to quaternary structure, (Microbial infection) Interacts with human cytomegalovirus/HHV-5 protein vICA/UL36; this interaction inhibits CASP8 activation. (Microbial infection) Interacts with NleF from pathogenic E.coli. In terms of assembly, (Microbial infection) Interacts with molluscum contagiosum virus protein MC160. As to quaternary structure, (Microbial infection) Interacts (via RIP homotypic interaction motif) with herpes simplex virus 1/HHV-1 protein RIR1/ICP6 (via RIP homotypic interaction motif); this interaction prevents necroptosis activation. (Microbial infection) Interacts (via RIP homotypic interaction motif) with herpes simplex virus 2/HHV-2 protein RIR1/ICP10 (via RIP homotypic interaction motif); this interaction prevents necroptosis activation. Generation of the p10 and p18 subunits requires association with the death-inducing signaling complex (DISC), whereas additional processing is likely due to the autocatalytic activity of the activated protease. GZMB and CASP10 can be involved in these processing events. Post-translationally, phosphorylation on Ser-387 during mitosis by CDK1 inhibits activation by proteolysis and prevents apoptosis. Phosphorylation on Tyr-380 by SRC is mediated by interaction with the SRC SH2 domain and does not affect dimerization or recruitment to the death-inducing signaling complex (DISC) but negatively regulates DISC-mediated processing and activation of CASP8, down-regulating its proapoptotic function. Phosphorylation on Tyr-380 also enhances localization to lamellipodia in migrating cells. In terms of processing, (Microbial infection) ADP-riboxanation by C.violaceum CopC blocks CASP8 processing, preventing CASP8 activation and ability to mediate extrinsic apoptosis. (Microbial infection) Proteolytically cleaved by the cowpox virus CRMA death inhibitory protein. In terms of tissue distribution, isoform 1, isoform 5 and isoform 7 are expressed in a wide variety of tissues. Highest expression in peripheral blood leukocytes, spleen, thymus and liver. Barely detectable in brain, testis and skeletal muscle.

It localises to the cytoplasm. The protein resides in the nucleus. It is found in the cell projection. Its subcellular location is the lamellipodium. The catalysed reaction is Strict requirement for Asp at position P1 and has a preferred cleavage sequence of (Leu/Asp/Val)-Glu-Thr-Asp-|-(Gly/Ser/Ala).. CASP8 activity is restricted by RIPK1. Inhibited by the effector protein NleF that is produced by pathogenic E.coli; this inhibits apoptosis. Functionally, thiol protease that plays a key role in programmed cell death by acting as a molecular switch for apoptosis, necroptosis and pyroptosis, and is required to prevent tissue damage during embryonic development and adulthood. Initiator protease that induces extrinsic apoptosis by mediating cleavage and activation of effector caspases responsible for FAS/CD95-mediated and TNFRSF1A-induced cell death. Cleaves and activates effector caspases CASP3, CASP4, CASP6, CASP7, CASP9 and CASP10. Binding to the adapter molecule FADD recruits it to either receptor FAS/TNFRSF6 or TNFRSF1A. The resulting aggregate called the death-inducing signaling complex (DISC) performs CASP8 proteolytic activation. The active dimeric enzyme is then liberated from the DISC and free to activate downstream apoptotic proteases. Proteolytic fragments of the N-terminal propeptide (termed CAP3, CAP5 and CAP6) are likely retained in the DISC. In addition to extrinsic apoptosis, also acts as a negative regulator of necroptosis: acts by cleaving RIPK1 at 'Asp-324', which is crucial to inhibit RIPK1 kinase activity, limiting TNF-induced apoptosis, necroptosis and inflammatory response. Also able to initiate pyroptosis by mediating cleavage and activation of gasdermin-C and -D (GSDMC and GSDMD, respectively): gasdermin cleavage promotes release of the N-terminal moiety that binds to membranes and forms pores, triggering pyroptosis. Initiates pyroptosis following inactivation of MAP3K7/TAK1. Also acts as a regulator of innate immunity by mediating cleavage and inactivation of N4BP1 downstream of TLR3 or TLR4, thereby promoting cytokine production. May participate in the Granzyme B (GZMB) cell death pathways. Cleaves PARP1 and PARP2. Independent of its protease activity, promotes cell migration following phosphorylation at Tyr-380. Its function is as follows. Lacks the catalytic site and may interfere with the pro-apoptotic activity of the complex. Lacks the catalytic site and may interfere with the pro-apoptotic activity of the complex. Acts as an inhibitor of the caspase cascade. This is Caspase-8 from Homo sapiens (Human).